A 327-amino-acid chain; its full sequence is Alkanal monooxygenase beta chain (327 aa).

It belongs to the bacterial luciferase oxidoreductase family. Heterodimer of an alpha and a beta chain.

The catalysed reaction is a long-chain fatty aldehyde + FMNH2 + O2 = a long-chain fatty acid + hnu + FMN + H2O + 2 H(+). Light-emitting reaction in luminous bacteria. The specific role of the beta subunit is unknown, but it is absolutely required for bioluminescence activity. This Photorhabdus luminescens (Xenorhabdus luminescens) protein is Alkanal monooxygenase beta chain (luxB).